The chain runs to 244 residues: MGIGYGASDEQLEKQIGCVKYTLFCFNIVAWMISTALFALTVWLRAEPGFNDWLRILEAQSFYIGVYVLIGISIVMMAVSFLGCLSALMENTLALFVFVGTQVFGFIAIVAGSAVLLQFSTINSSLQPLLNVSLRGFVATSEYTYSNYVLTMIQENIGCCGATGPWDYLDLRQPLPSSCRDTVSGNAFFNGCVDELTWFFEGKTGWIVALAMTLGLLNVICAVMSFVLVQAVKKEEEQASNYRR.

Topologically, residues 1 to 22 are cytoplasmic; the sequence is MGIGYGASDEQLEKQIGCVKYT. Residues 23-43 traverse the membrane as a helical segment; it reads LFCFNIVAWMISTALFALTVW. Residues 44–61 lie on the Extracellular side of the membrane; that stretch reads LRAEPGFNDWLRILEAQS. Residues 62 to 82 form a helical membrane-spanning segment; that stretch reads FYIGVYVLIGISIVMMAVSFL. At 83-91 the chain is on the cytoplasmic side; that stretch reads GCLSALMEN. The helical transmembrane segment at 92 to 112 threads the bilayer; that stretch reads TLALFVFVGTQVFGFIAIVAG. The Extracellular segment spans residues 113-206; sequence SAVLLQFSTI…TWFFEGKTGW (94 aa). Residues 207 to 227 form a helical membrane-spanning segment; it reads IVALAMTLGLLNVICAVMSFV. Residues 228–244 are Cytoplasmic-facing; the sequence is LVQAVKKEEEQASNYRR.

It belongs to the tetraspanin (TM4SF) family. In terms of assembly, forms a complex with Ssk and mesh.

It is found in the apicolateral cell membrane. It localises to the cell junction. The protein resides in the septate junction. Functionally, required for assembly of smooth septate junctions (sSJs), together with Ssk and mesh. Important for barrier function of the midgut epithelium. The chain is Tetraspanin-2A from Drosophila melanogaster (Fruit fly).